Consider the following 201-residue polypeptide: Syndecan-2 (201 aa).

The N-terminal stretch at 1–18 (MQRAWILLTLGLMACVSA) is a signal peptide. Residues 19 to 144 (ETRAELTSDK…HSDNLFKRTE (126 aa)) are Extracellular-facing. Ser-41, Ser-55, and Ser-57 each carry an O-linked (Xyl...) (glycosaminoglycan) serine glycan. 2 disordered regions span residues 42 to 69 (GLYP…PDLT) and 88 to 129 (TMTL…KSTD). Polar residues predominate over residues 90-102 (TLKTQSITPTQTE). Residues 106 to 123 (ETDKKEFEISEAEEKQDP) are compositionally biased toward basic and acidic residues. Phosphoserine is present on Ser-115. The helical transmembrane segment at 145–169 (VLAAVIAGGVIGFLFAIFLILLLVY) threads the bilayer. Over 170–201 (RMRKKDEGSYDLGERKPSSAAYQKAPTKEFYA) the chain is Cytoplasmic. Positions 178–201 (SYDLGERKPSSAAYQKAPTKEFYA) are disordered. Position 187 is a phosphoserine (Ser-187).

The protein belongs to the syndecan proteoglycan family. Interacts (via cytoplasmic domain) with SARM1. Forms a complex with SDCBP and PDCD6IP. In terms of processing, O-glycosylated; contains both heparan sulfate and chondroitin sulfate.

The protein localises to the membrane. Functionally, cell surface proteoglycan which regulates dendritic arbor morphogenesis. This Rattus norvegicus (Rat) protein is Syndecan-2 (Sdc2).